The chain runs to 408 residues: Neutral cholesterol ester hydrolase 1 (408 aa).

The Cytoplasmic segment spans residues 1-4; sequence MRSS. The chain crosses the membrane as a helical; Signal-anchor for type II membrane protein span at residues 5-25; that stretch reads CVLLAALLALAAYYVYIPLPS. Topologically, residues 26–408 are lumenal; it reads AVSDPWKLML…SYIKWLDQNL (383 aa). Positions 113–115 match the Involved in the stabilization of the negatively charged intermediate by the formation of the oxyanion hole motif; that stretch reads HGG. Residue Ser191 is part of the active site. N-linked (GlcNAc...) asparagine glycosylation occurs at Asn270. The active site involves Asp348. Asn367 carries an N-linked (GlcNAc...) asparagine glycan. Residue His378 is part of the active site. The N-linked (GlcNAc...) asparagine glycan is linked to Asn389.

This sequence belongs to the 'GDXG' lipolytic enzyme family. N-glycosylated. Present in brain, heart, kidney, lung, spinal cord and testis but not liver (at protein level). Expressed in peritoneal macrophages and kidney.

It localises to the cell membrane. It is found in the microsome. It catalyses the reaction a 1-O-alkyl-2-acetyl-sn-glycerol + H2O = a 1-O-alkyl-sn-glycerol + acetate + H(+). The enzyme catalyses 1-O-hexadecyl-2-acetyl-sn-glycerol + H2O = 1-O-hexadecyl-sn-glycerol + acetate + H(+). The catalysed reaction is a cholesterol ester + H2O = cholesterol + a fatty acid + H(+). It carries out the reaction cholesteryl (9Z-octadecenoate) + H2O = cholesterol + (9Z)-octadecenoate + H(+). Inhibited by bulky trifluoromethyl ketones. Hydrolyzes 2-acetyl monoalkylglycerol ether (1-O-alkyl-2-acetyl-sn-glycerol), the penultimate precursor of the pathway for de novo synthesis of platelet-activating factor. May be responsible for the hydrolysis of cholesterol esters (such as cholesteryl (9Z-octadecenoate)) in macrophages. Also involved in organ detoxification by hydrolyzing exogenous organophosphorus compounds. This chain is Neutral cholesterol ester hydrolase 1 (Nceh1), found in Mus musculus (Mouse).